We begin with the raw amino-acid sequence, 212 residues long: Ribosomal RNA large subunit methyltransferase E (212 aa).

The segment at 1–26 (MPAERPSVSQKPKNPYKRPDAFTKAA) is disordered. 5 residues coordinate S-adenosyl-L-methionine: Gly63, Trp65, Asp83, Asp101, and Asp122. Lys162 functions as the Proton acceptor in the catalytic mechanism.

Belongs to the class I-like SAM-binding methyltransferase superfamily. RNA methyltransferase RlmE family.

Its subcellular location is the cytoplasm. It catalyses the reaction uridine(2552) in 23S rRNA + S-adenosyl-L-methionine = 2'-O-methyluridine(2552) in 23S rRNA + S-adenosyl-L-homocysteine + H(+). Specifically methylates the uridine in position 2552 of 23S rRNA at the 2'-O position of the ribose in the fully assembled 50S ribosomal subunit. This chain is Ribosomal RNA large subunit methyltransferase E, found in Sorangium cellulosum (strain So ce56) (Polyangium cellulosum (strain So ce56)).